A 122-amino-acid chain; its full sequence is Biogenesis of lysosome-related organelles complex 1 subunit BLS1 (122 aa).

S33 is modified (phosphoserine).

Belongs to the BLOC1S1 family. In terms of assembly, component of the biogenesis of lysosome-related organelles complex-1 (BLOC-1) composed of at least BLI1, BLS1, CNL1, KXD1, SNN1 and VAB2.

The protein localises to the endosome. Component of the biogenesis of lysosome-related organelles complex-1 (BLOC-1), a complex involved in endosomal cargo sorting. The sequence is that of Biogenesis of lysosome-related organelles complex 1 subunit BLS1 (BLS1) from Saccharomyces cerevisiae (strain YJM789) (Baker's yeast).